A 419-amino-acid chain; its full sequence is N-acylglucosamine 2-epimerase (419 aa).

A leucine-zipper region spans residues 185–206 (LLSLVEQLGEEDEELTNMYAEL). Ser-418 bears the Phosphoserine mark.

Belongs to the N-acylglucosamine 2-epimerase family. In terms of assembly, homodimer. Forms a heterodimer with renin and inhibits its activity.

It carries out the reaction an N-acyl-D-glucosamine = an N-acyl-D-mannosamine. Its pathway is amino-sugar metabolism; N-acetylneuraminate degradation. In terms of biological role, catalyzes the interconversion of N-acetylglucosamine to N-acetylmannosamine. Involved in the N-glycolylneuraminic acid (Neu5Gc) degradation pathway. This chain is N-acylglucosamine 2-epimerase (Renbp), found in Mus musculus (Mouse).